The sequence spans 329 residues: Delta-aminolevulinic acid dehydratase (329 aa).

K202 acts as the Schiff-base intermediate with substrate in catalysis. Residues R212 and R223 each coordinate 5-aminolevulinate. A Mg(2+)-binding site is contributed by E239. K254 (schiff-base intermediate with substrate) is an active-site residue. Residues S280 and Y319 each contribute to the 5-aminolevulinate site.

Belongs to the ALAD family. Homooctamer.

The enzyme catalyses 2 5-aminolevulinate = porphobilinogen + 2 H2O + H(+). It functions in the pathway porphyrin-containing compound metabolism; protoporphyrin-IX biosynthesis; coproporphyrinogen-III from 5-aminolevulinate: step 1/4. In terms of biological role, catalyzes an early step in the biosynthesis of tetrapyrroles. Binds two molecules of 5-aminolevulinate per subunit, each at a distinct site, and catalyzes their condensation to form porphobilinogen. The sequence is that of Delta-aminolevulinic acid dehydratase (hemB) from Mycobacterium tuberculosis (strain CDC 1551 / Oshkosh).